Consider the following 313-residue polypeptide: Alpha-S1-casein (313 aa).

An N-terminal signal peptide occupies residues 1-15; the sequence is MKLLILTCLVAAAFA. The segment covering 77 to 96 has biased composition (low complexity); sequence ASEEQAMASAQEDSSISSSS. Positions 77 to 111 are disordered; sequence ASEEQAMASAQEDSSISSSSEESEEAIPNITEQKN. Serine 90, serine 91, serine 93, serine 94, serine 95, and serine 96 each carry phosphoserine. Repeat copies occupy residues 135–140, 141–146, 147–152, 153–158, 159–164, 165–170, 171–176, 177–182, 183–188, 189–194, 195–200, 201–206, 207–212, 213–218, and 219–224. The 15 X 6 AA tandem repeats stretch occupies residues 135-224; it reads LLQKASLAKQ…QQASLAQKHH (90 aa).

It belongs to the alpha-casein family. In terms of tissue distribution, mammary gland specific. Secreted in milk.

It is found in the secreted. In terms of biological role, important role in the capacity of milk to transport calcium phosphate. The protein is Alpha-S1-casein (Csn1s1) of Mus musculus (Mouse).